The sequence spans 425 residues: Serine--tRNA ligase (425 aa).

The disordered stretch occupies residues 41 to 70 (TERSQLQARSNQVGKQVGEKIKSGSDPKGT). Over residues 44-54 (SQLQARSNQVG) the composition is skewed to polar residues. Positions 57–70 (VGEKIKSGSDPKGT) are enriched in basic and acidic residues. Residue 234-236 (TSE) coordinates L-serine. Position 265–267 (265–267 (RRE)) interacts with ATP. E288 contributes to the L-serine binding site. 352-355 (EISS) contacts ATP. S388 contacts L-serine.

The protein belongs to the class-II aminoacyl-tRNA synthetase family. Type-1 seryl-tRNA synthetase subfamily. Homodimer. The tRNA molecule binds across the dimer.

The protein localises to the cytoplasm. The enzyme catalyses tRNA(Ser) + L-serine + ATP = L-seryl-tRNA(Ser) + AMP + diphosphate + H(+). The catalysed reaction is tRNA(Sec) + L-serine + ATP = L-seryl-tRNA(Sec) + AMP + diphosphate + H(+). It functions in the pathway aminoacyl-tRNA biosynthesis; selenocysteinyl-tRNA(Sec) biosynthesis; L-seryl-tRNA(Sec) from L-serine and tRNA(Sec): step 1/1. In terms of biological role, catalyzes the attachment of serine to tRNA(Ser). Is also able to aminoacylate tRNA(Sec) with serine, to form the misacylated tRNA L-seryl-tRNA(Sec), which will be further converted into selenocysteinyl-tRNA(Sec). This is Serine--tRNA ligase from Trichodesmium erythraeum (strain IMS101).